The primary structure comprises 310 residues: 4-hydroxy-3-methylbut-2-enyl diphosphate reductase (310 aa).

C12 contributes to the [4Fe-4S] cluster binding site. (2E)-4-hydroxy-3-methylbut-2-enyl diphosphate-binding residues include H41 and H74. Dimethylallyl diphosphate-binding residues include H41 and H74. Residues H41 and H74 each coordinate isopentenyl diphosphate. C96 contributes to the [4Fe-4S] cluster binding site. A (2E)-4-hydroxy-3-methylbut-2-enyl diphosphate-binding site is contributed by H124. Dimethylallyl diphosphate is bound at residue H124. H124 serves as a coordination point for isopentenyl diphosphate. The active-site Proton donor is the E126. T167 contacts (2E)-4-hydroxy-3-methylbut-2-enyl diphosphate. Residue C197 coordinates [4Fe-4S] cluster. Residues S225, S226, N227, and S269 each contribute to the (2E)-4-hydroxy-3-methylbut-2-enyl diphosphate site. Dimethylallyl diphosphate contacts are provided by S225, S226, N227, and S269. Positions 225, 226, 227, and 269 each coordinate isopentenyl diphosphate.

The protein belongs to the IspH family. It depends on [4Fe-4S] cluster as a cofactor.

The catalysed reaction is isopentenyl diphosphate + 2 oxidized [2Fe-2S]-[ferredoxin] + H2O = (2E)-4-hydroxy-3-methylbut-2-enyl diphosphate + 2 reduced [2Fe-2S]-[ferredoxin] + 2 H(+). It carries out the reaction dimethylallyl diphosphate + 2 oxidized [2Fe-2S]-[ferredoxin] + H2O = (2E)-4-hydroxy-3-methylbut-2-enyl diphosphate + 2 reduced [2Fe-2S]-[ferredoxin] + 2 H(+). It participates in isoprenoid biosynthesis; dimethylallyl diphosphate biosynthesis; dimethylallyl diphosphate from (2E)-4-hydroxy-3-methylbutenyl diphosphate: step 1/1. It functions in the pathway isoprenoid biosynthesis; isopentenyl diphosphate biosynthesis via DXP pathway; isopentenyl diphosphate from 1-deoxy-D-xylulose 5-phosphate: step 6/6. Its function is as follows. Catalyzes the conversion of 1-hydroxy-2-methyl-2-(E)-butenyl 4-diphosphate (HMBPP) into a mixture of isopentenyl diphosphate (IPP) and dimethylallyl diphosphate (DMAPP). Acts in the terminal step of the DOXP/MEP pathway for isoprenoid precursor biosynthesis. This Tolumonas auensis (strain DSM 9187 / NBRC 110442 / TA 4) protein is 4-hydroxy-3-methylbut-2-enyl diphosphate reductase.